Reading from the N-terminus, the 474-residue chain is ATP synthase subunit beta (474 aa).

ATP is bound at residue 151–158 (GGAGVGKT).

Belongs to the ATPase alpha/beta chains family. F-type ATPases have 2 components, CF(1) - the catalytic core - and CF(0) - the membrane proton channel. CF(1) has five subunits: alpha(3), beta(3), gamma(1), delta(1), epsilon(1). CF(0) has three main subunits: a(1), b(2) and c(9-12). The alpha and beta chains form an alternating ring which encloses part of the gamma chain. CF(1) is attached to CF(0) by a central stalk formed by the gamma and epsilon chains, while a peripheral stalk is formed by the delta and b chains.

It localises to the cell inner membrane. The catalysed reaction is ATP + H2O + 4 H(+)(in) = ADP + phosphate + 5 H(+)(out). Functionally, produces ATP from ADP in the presence of a proton gradient across the membrane. The catalytic sites are hosted primarily by the beta subunits. The sequence is that of ATP synthase subunit beta from Paracoccus denitrificans (strain Pd 1222).